The chain runs to 300 residues: Ribosomal RNA small subunit methyltransferase H (300 aa).

Residues 46 to 48, Asp65, Phe92, Asp107, and Gln114 each bind S-adenosyl-L-methionine; that span reads GGH.

This sequence belongs to the methyltransferase superfamily. RsmH family.

The protein resides in the cytoplasm. It carries out the reaction cytidine(1402) in 16S rRNA + S-adenosyl-L-methionine = N(4)-methylcytidine(1402) in 16S rRNA + S-adenosyl-L-homocysteine + H(+). In terms of biological role, specifically methylates the N4 position of cytidine in position 1402 (C1402) of 16S rRNA. This Prochlorococcus marinus (strain MIT 9301) protein is Ribosomal RNA small subunit methyltransferase H.